The primary structure comprises 127 residues: Fluoride-specific ion channel FluC 1 (127 aa).

The next 4 helical transmembrane spans lie at 4–24 (TLLAVFIGGGVGSMARWLVSL), 35–55 (VGTLIVNLVGAFIIGLTLAFF), 71–91 (TGFCGGLTTFSTFSVEVVYLI), and 101–121 (GTILLNVAGSLAMTMLAFILV). Residues glycine 75 and threonine 78 each coordinate Na(+).

It belongs to the fluoride channel Fluc/FEX (TC 1.A.43) family.

Its subcellular location is the cell inner membrane. The enzyme catalyses fluoride(in) = fluoride(out). Its activity is regulated as follows. Na(+) is not transported, but it plays an essential structural role and its presence is essential for fluoride channel function. Fluoride-specific ion channel. Important for reducing fluoride concentration in the cell, thus reducing its toxicity. The polypeptide is Fluoride-specific ion channel FluC 1 (Yersinia pestis).